The following is a 381-amino-acid chain: MSLNMFWFLPTHGDGHYLGTEEGSRPIDHGYLQQIAQAADRLGYTGVLIPTGRSCEDAWLVAASMIPVTQRLKFLVALRPSVTSPTVAARQAATLDRLSNGRALFNLVTGSDPQELAGDGVFLDHSERYEASAEFTQVWRRLLLGETVDFNGKHIHVRGAKLLFPPIQQPYPPLYFGGSSDVAQELAAEQVDLYLTWGEPPELVKEKIEHVRAKAAAHGRKIRFGVRLHVIVRETNDEAWQAAERLISRLDDETIAKAQAAFARTDSVGQQRMAALHNGKRDNLEISPNLWAGVGLVRGGAGTALVGDGPTVAARINEYAALGIDSFVLSGYPHLEEAYRVGELLFPHLDVAIPEIPQPQPLNPQGEAVANDFIPRNVAQS.

The protein belongs to the SsuD family. In terms of assembly, homotetramer.

It catalyses the reaction an alkanesulfonate + FMNH2 + O2 = an aldehyde + FMN + sulfite + H2O + 2 H(+). Catalyzes the desulfonation of aliphatic sulfonates. The chain is Alkanesulfonate monooxygenase from Escherichia coli O6:H1 (strain CFT073 / ATCC 700928 / UPEC).